Consider the following 358-residue polypeptide: Aromatic amino acid aminotransferase (358 aa).

At Lys214 the chain carries N6-(pyridoxal phosphate)lysine.

Belongs to the class-II pyridoxal-phosphate-dependent aminotransferase family. Homodimer. Pyridoxal 5'-phosphate serves as cofactor.

It catalyses the reaction an aromatic L-alpha-amino acid + 2-oxoglutarate = an aromatic oxo-acid + L-glutamate. Its function is as follows. Aminotransferase that catalyzes the conversion of aromatic amino acids and 2-oxoglutarate into corresponding aromatic oxo acids and L-glutamate. The polypeptide is Aromatic amino acid aminotransferase (Rhodococcus erythropolis (strain PR4 / NBRC 100887)).